The primary structure comprises 417 residues: NADH-quinone oxidoreductase subunit D (417 aa).

It belongs to the complex I 49 kDa subunit family. In terms of assembly, NDH-1 is composed of 14 different subunits. Subunits NuoB, C, D, E, F, and G constitute the peripheral sector of the complex.

The protein localises to the cell inner membrane. It carries out the reaction a quinone + NADH + 5 H(+)(in) = a quinol + NAD(+) + 4 H(+)(out). In terms of biological role, NDH-1 shuttles electrons from NADH, via FMN and iron-sulfur (Fe-S) centers, to quinones in the respiratory chain. The immediate electron acceptor for the enzyme in this species is believed to be ubiquinone. Couples the redox reaction to proton translocation (for every two electrons transferred, four hydrogen ions are translocated across the cytoplasmic membrane), and thus conserves the redox energy in a proton gradient. The polypeptide is NADH-quinone oxidoreductase subunit D (Francisella tularensis subsp. holarctica (strain FTNF002-00 / FTA)).